The sequence spans 114 residues: Small ribosomal subunit protein uS17 (114 aa).

This sequence belongs to the universal ribosomal protein uS17 family. Part of the 30S ribosomal subunit.

One of the primary rRNA binding proteins, it binds specifically to the 5'-end of 16S ribosomal RNA. In Sulfolobus acidocaldarius (strain ATCC 33909 / DSM 639 / JCM 8929 / NBRC 15157 / NCIMB 11770), this protein is Small ribosomal subunit protein uS17.